A 182-amino-acid polypeptide reads, in one-letter code: CDP-diacylglycerol--glycerol-3-phosphate 3-phosphatidyltransferase (182 aa).

At Q2–F12 the chain is on the cytoplasmic side. The helical transmembrane segment at R13–L37 threads the bilayer. Over I38–T60 the chain is Periplasmic. The chain crosses the membrane as a helical span at residues R61 to L81. Topologically, residues V82–Y86 are cytoplasmic. Residues H87–A107 traverse the membrane as a helical segment. At L108–P145 the chain is on the periplasmic side. Residues N146–M168 traverse the membrane as a helical segment. Topologically, residues L169–D181 are cytoplasmic.

The protein belongs to the CDP-alcohol phosphatidyltransferase class-I family.

It localises to the cell inner membrane. It carries out the reaction a CDP-1,2-diacyl-sn-glycerol + sn-glycerol 3-phosphate = a 1,2-diacyl-sn-glycero-3-phospho-(1'-sn-glycero-3'-phosphate) + CMP + H(+). It functions in the pathway phospholipid metabolism; phosphatidylglycerol biosynthesis; phosphatidylglycerol from CDP-diacylglycerol: step 1/2. Catalyzes the conversion of cytidine diphosphate diacylglycerol (CDP-DG) and glycerol 3-phosphate into phosphatidylglycerol. Essential for the synthesis of anionic phospholipids, thereby playing a role in balancing the ratio of zwitterionic and anionic phospholipids, which is thought to be important for normal membrane function. In Salmonella paratyphi A (strain ATCC 9150 / SARB42), this protein is CDP-diacylglycerol--glycerol-3-phosphate 3-phosphatidyltransferase.